The primary structure comprises 311 residues: T-cell immunomodulatory protein (311 aa).

Asparagine 52, asparagine 70, and asparagine 181 each carry an N-linked (GlcNAc...) asparagine glycan. The chain crosses the membrane as a helical span at residues valine 266–isoleucine 286.

The protein belongs to the TIP family. Interacts with RUVBL1, RUVBL2 and alpha-tubulin.

It localises to the secreted. It is found in the cell membrane. Functionally, modulator of T-cell function. Has a protective effect in graft versus host disease model. The polypeptide is T-cell immunomodulatory protein (Macaca fascicularis (Crab-eating macaque)).